The sequence spans 1145 residues: Error-prone DNA polymerase (1145 aa).

This sequence belongs to the DNA polymerase type-C family. DnaE2 subfamily.

Its subcellular location is the cytoplasm. It carries out the reaction DNA(n) + a 2'-deoxyribonucleoside 5'-triphosphate = DNA(n+1) + diphosphate. Its function is as follows. DNA polymerase involved in damage-induced mutagenesis and translesion synthesis (TLS). It is not the major replicative DNA polymerase. This is Error-prone DNA polymerase from Rhodopirellula baltica (strain DSM 10527 / NCIMB 13988 / SH1).